Here is a 61-residue protein sequence, read N- to C-terminus: MMNMKPTESYEQLDNSALEQVVGGKYYGNGVHCTKSGCSVNWGEAFSAGVHRLANGGNGFW.

The propeptide occupies 1–24 (MMNMKPTESYEQLDNSALEQVVGG). An intrachain disulfide couples Cys33 to Cys38.

The protein belongs to the bacteriocin class IIA/YGNGV family.

Its subcellular location is the secreted. Inhibits a wide spectrum of lactic acid bacteria. This Leuconostoc gelidum protein is Bacteriocin leucocin-A (lcnA).